Consider the following 557-residue polypeptide: Arginine--tRNA ligase (557 aa).

The 'HIGH' region motif lies at 132–142 (ANPTGDLHLGH).

This sequence belongs to the class-I aminoacyl-tRNA synthetase family. As to quaternary structure, monomer.

Its subcellular location is the cytoplasm. It catalyses the reaction tRNA(Arg) + L-arginine + ATP = L-arginyl-tRNA(Arg) + AMP + diphosphate. This chain is Arginine--tRNA ligase, found in Geobacillus kaustophilus (strain HTA426).